The primary structure comprises 117 residues: Holo-[acyl-carrier-protein] synthase (117 aa).

Mg(2+) is bound by residues Asp8 and Glu55.

This sequence belongs to the P-Pant transferase superfamily. AcpS family. Mg(2+) is required as a cofactor.

The protein resides in the cytoplasm. It catalyses the reaction apo-[ACP] + CoA = holo-[ACP] + adenosine 3',5'-bisphosphate + H(+). Transfers the 4'-phosphopantetheine moiety from coenzyme A to a Ser of acyl-carrier-protein. The protein is Holo-[acyl-carrier-protein] synthase of Finegoldia magna (strain ATCC 29328 / DSM 20472 / WAL 2508) (Peptostreptococcus magnus).